A 993-amino-acid chain; its full sequence is Isoleucine--tRNA ligase, mitochondrial (993 aa).

A mitochondrion-targeting transit peptide spans Ser1 to Ala29. An N6-acetyllysine; alternate modification is found at Lys55. Lys55 is modified (N6-succinyllysine; alternate). The 'HIGH' region signature appears at Pro97–His107. Lys170 carries the N6-acetyllysine modification. Position 175 is an N6-succinyllysine (Lys175). An N6-acetyllysine modification is found at Lys214. Position 222 is an N6-acetyllysine; alternate (Lys222). N6-succinyllysine; alternate is present on Lys222. Lys460 and Lys481 each carry N6-succinyllysine. Positions 645 and 648 each coordinate ATP. The 'KMSKS' region signature appears at Lys645–Ser649. The residue at position 706 (Lys706) is an N6-acetyllysine. N6-acetyllysine; alternate occurs at positions 756 and 762. N6-succinyllysine; alternate is present on residues Lys756 and Lys762.

It belongs to the class-I aminoacyl-tRNA synthetase family.

The protein resides in the mitochondrion matrix. It carries out the reaction tRNA(Ile) + L-isoleucine + ATP = L-isoleucyl-tRNA(Ile) + AMP + diphosphate. Functionally, aminoacyl-tRNA synthetase that catalyzes the specific attachment of isoleucine to its cognate tRNA (tRNA(Ile)). This is Isoleucine--tRNA ligase, mitochondrial (IARS2) from Macaca fascicularis (Crab-eating macaque).